A 482-amino-acid chain; its full sequence is Exodeoxyribonuclease I (482 aa).

The Exonuclease domain occupies 13-194; it reads LFYDYETFGI…TSDVYATIEL (182 aa). 3 residues coordinate Mg(2+): Asp-16, Glu-18, and Asp-187. Residue Glu-18 coordinates substrate. Residues 203 to 351 enclose the ExoI SH3-like domain; that stretch reads PKLFDFFFKY…LVKNVLLKKN (149 aa). Positions 355 to 471 constitute an ExoI C-terminal domain; it reads NSLNVDLQIY…DLLKYVFKKY (117 aa).

Monomer. Interacts with ssb (via C-terminus); this interaction stimulates the exonuclease activity by recruiting the enzyme to its substrate. The cofactor is Mg(2+).

The enzyme catalyses Exonucleolytic cleavage in the 3'- to 5'-direction to yield nucleoside 5'-phosphates.. Its function is as follows. Degrades single-stranded DNA (ssDNA) in a highly processive manner. Also functions as a DNA deoxyribophosphodiesterase that releases deoxyribose-phosphate moieties following the cleavage of DNA at an apurinic/apyrimidinic (AP) site by either an AP endonuclease or AP lyase. In Buchnera aphidicola subsp. Schizaphis graminum (strain Sg), this protein is Exodeoxyribonuclease I (sbcB).